Consider the following 1408-residue polypeptide: DNA-directed RNA polymerase subunit beta' (1408 aa).

Zn(2+) contacts are provided by C70, C72, C85, and C88. Positions 460, 462, and 464 each coordinate Mg(2+). Residues C814, C887, C894, and C897 each coordinate Zn(2+).

This sequence belongs to the RNA polymerase beta' chain family. As to quaternary structure, the RNAP catalytic core consists of 2 alpha, 1 beta, 1 beta' and 1 omega subunit. When a sigma factor is associated with the core the holoenzyme is formed, which can initiate transcription. Mg(2+) is required as a cofactor. Requires Zn(2+) as cofactor.

The enzyme catalyses RNA(n) + a ribonucleoside 5'-triphosphate = RNA(n+1) + diphosphate. DNA-dependent RNA polymerase catalyzes the transcription of DNA into RNA using the four ribonucleoside triphosphates as substrates. This is DNA-directed RNA polymerase subunit beta' from Hydrogenovibrio crunogenus (strain DSM 25203 / XCL-2) (Thiomicrospira crunogena).